The chain runs to 1369 residues: MRPPGFLSRAPSLNRAERGIWSCSMDQREPLPPAPAENEMKYDTNNNEEEEGEQFDFDSGDEIPEADRQAPSAPETGGAGASEAPAPTGGEDGAGAETTPVAEPTKLVLPMKVNPYSVIDITPFQEDQPPTPVPSAEEENVGLHVPCGYLVPVPCGYAVPSNLPLLLPAYSSPVIICATSLDEEAETPEVTEDRQPNSLSSEEPPTSEDQVGREDSALARWAADPANTAWMENPEEAIYDDVPRENSDSEPDEMIYDDVENGDEGGNSSLEYGWSSSEFESYEEQSDSECKNGIPRSFLRSNHKKQLSHDLTRLKEHYEKKMRDLMASTVGVVEIQQLRQKHELKMQKLVKAAKDGTKDGLERTRAAVKRGRSFIRTKSLIAQDHRSSLEEEQNLFIDVDCKHPEAILTPMPEGLSQQQVVRRYILGSVVDSEKNYVDALKRILEQYEKPLSEMEPKVLSERKLKTVFYRVKEILQCHSLFQIALASRVSEWDSVEMIGDVFVASFSKSMVLDAYSEYVNNFSTAVAVLKKTCATKPAFLEFLKQEQEASPDRTTLYSLMMKPIQRFPQFILLLQDMLKNTSKGHPDRLPLQMALTELETLAEKLNERKRDADQRCEVKQIAKAINERYLNKLLSSGSRYLIRSDDMIETVYNDRGEIVKTKERRVFMLNDVLMCATVSSRPSHDSRVMSSQRYLLKWSVPLGHVDAIEYGSSAGTGEHSRHLAVHPPESLAVVANAKPNKVYMGPGQLYQDLQNLLHDLNVIGQITQLIGNLKGNYQNLNQSVAHDWTSGLQRLILKKEDEIRAADCCRIQLQLPGKQDKSGRPTFFTAVFNTFTPAIKESWVNSLQMAKLALEEENHMGWFCVEDDGNHIKKEKHPLLVGHMPVMVAKQQEFKIECAAYNPEPYLNNESQPDSFSTAHGFLWIGSCTHQMGQIAIVSFQNSTPKVIECFNVESRILCMLYVPVEEKRREPGAPPDPETPAVRASDVPTICVGTEEGSISIYKSSQGSKKVRLQHFFTPEKSTVMSLACTSQSLYAGLVNGAVASYARAPDGSWDSEPQKVIKLGVLPVRSLLMMEDTLWAASGGQVFIISVETHAVEGQLEAHQEEGMVISHMAVSGVGIWIAFTSGSTLRLFHTETLKHLQDINIATPVHNMLPGHQRLSVTSLLVCHGLLMVGTSLGVLVALPVPRLQGIPKVTGRGMVSYHAHNSPVKFIVLATALHEKDKDKSRDSLAPGPEPQDEDQKDALPSGGAGSSLSQGDPDAAIWLGDSLGSMTQKSDLSSSSGSLSLSHGSSSLEHRSEDSTIYDLLKDPVSLRSKARRAKKAKASSALVVCGGQGHRRVHRKARQPHQEELAPTVMVWQIPLLNI.

The segment at 1 to 106 is disordered; that stretch reads MRPPGFLSRA…ETTPVAEPTK (106 aa). Over residues 46-64 the composition is skewed to acidic residues; that stretch reads NNEEEEGEQFDFDSGDEIP. Residues 83-100 are compositionally biased toward low complexity; that stretch reads EAPAPTGGEDGAGAETTP. At Ser-180 the chain carries Phosphoserine. The interval 184–254 is disordered; sequence EAETPEVTED…ENSDSEPDEM (71 aa). Residues 196–209 show a composition bias toward polar residues; sequence PNSLSSEEPPTSED. The stretch at 304–355 forms a coiled coil; the sequence is KKQLSHDLTRLKEHYEKKMRDLMASTVGVVEIQQLRQKHELKMQKLVKAAKD. A Phosphoserine modification is found at Ser-379. Residues 421 to 608 form the DH domain; that stretch reads VRRYILGSVV…ETLAEKLNER (188 aa). Disordered regions lie at residues 1226 to 1260 and 1277 to 1297; these read KDKS…LSQG and QKSD…SSSL. Residues 1279-1296 are compositionally biased toward low complexity; the sequence is SDLSSSSGSLSLSHGSSS. Ser-1287 carries the phosphoserine modification. Gln-1338 carries the N5-methylglutamine modification.

In terms of processing, methylated at Gln-1338 by N6AMT1.

May play a role in developmental myelination of peripheral nerves. The chain is Rho guanine nucleotide exchange factor 10 (ARHGEF10) from Homo sapiens (Human).